A 518-amino-acid chain; its full sequence is Probable protein phosphatase 2C 14 (518 aa).

2 stretches are compositionally biased toward low complexity: residues 1–10 and 86–105; these read MVEAAAGRRS and PQRQ…APGA. Disordered regions lie at residues 1–31 and 86–108; these read MVEA…QQHQ and PQRQ…ADGR. One can recognise a PPM-type phosphatase domain in the interval 129-437; the sequence is VASLYTLQGK…DDCAVVCLFL (309 aa). The Mn(2+) site is built by aspartate 165 and glycine 166. The disordered stretch occupies residues 192 to 222; sequence TDEGRQTSTSSIKSNGDETGSPGNMGRDAEQ. The segment covering 197-213 has biased composition (polar residues); sequence QTSTSSIKSNGDETGSP. Mn(2+) contacts are provided by aspartate 382 and aspartate 428.

Belongs to the PP2C family. Mg(2+) is required as a cofactor. Mn(2+) serves as cofactor.

The catalysed reaction is O-phospho-L-seryl-[protein] + H2O = L-seryl-[protein] + phosphate. The enzyme catalyses O-phospho-L-threonyl-[protein] + H2O = L-threonyl-[protein] + phosphate. The protein is Probable protein phosphatase 2C 14 of Oryza sativa subsp. japonica (Rice).